We begin with the raw amino-acid sequence, 298 residues long: Putative glycylpeptide N-tetradecanoyltransferase (298 aa).

It belongs to the NMT family.

It carries out the reaction N-terminal glycyl-[protein] + tetradecanoyl-CoA = N-tetradecanoylglycyl-[protein] + CoA + H(+). Adds a myristoyl group to the N-terminal glycine residue of certain proteins. The protein is Putative glycylpeptide N-tetradecanoyltransferase of Melanoplus sanguinipes (Migratory grasshopper).